Consider the following 498-residue polypeptide: COP9 signalosome complex subunit 1 (498 aa).

The region spanning S249–K430 is the PCI domain.

Belongs to the CSN1 family. In terms of assembly, component of the COP9 signalosome (CSN) complex.

The protein localises to the cytoplasm. Its subcellular location is the nucleus. Its function is as follows. Component of the COP9 signalosome (CSN) complex that acts as an regulator of the ubiquitin (Ubl) conjugation pathway by mediating the deneddylation of the cullin subunit of SCF-type E3 ubiquitin-protein ligase complexes. The CSN complex seems to link protein degradation to sexual development. Required for fruit body formation. This Emericella nidulans (strain FGSC A4 / ATCC 38163 / CBS 112.46 / NRRL 194 / M139) (Aspergillus nidulans) protein is COP9 signalosome complex subunit 1 (csnA).